The primary structure comprises 379 residues: tRNA-specific 2-thiouridylase MnmA (379 aa).

ATP contacts are provided by residues 9-16 and Met-35; that span reads AMSGGVDS. An interaction with target base in tRNA region spans residues 94–96; sequence NPD. Cys-99 serves as the catalytic Nucleophile. A disulfide bridge connects residues Cys-99 and Cys-195. Residue Gly-123 coordinates ATP. Positions 145–147 are interaction with tRNA; that stretch reads KDQ. Catalysis depends on Cys-195, which acts as the Cysteine persulfide intermediate. The tract at residues 307-308 is interaction with tRNA; the sequence is RY.

Belongs to the MnmA/TRMU family.

Its subcellular location is the cytoplasm. It catalyses the reaction S-sulfanyl-L-cysteinyl-[protein] + uridine(34) in tRNA + AH2 + ATP = 2-thiouridine(34) in tRNA + L-cysteinyl-[protein] + A + AMP + diphosphate + H(+). Functionally, catalyzes the 2-thiolation of uridine at the wobble position (U34) of tRNA, leading to the formation of s(2)U34. In Xylella fastidiosa (strain M23), this protein is tRNA-specific 2-thiouridylase MnmA.